A 101-amino-acid polypeptide reads, in one-letter code: Urease subunit beta (101 aa).

The protein belongs to the urease beta subunit family. In terms of assembly, heterotrimer of UreA (gamma), UreB (beta) and UreC (alpha) subunits. Three heterotrimers associate to form the active enzyme.

It is found in the cytoplasm. It catalyses the reaction urea + 2 H2O + H(+) = hydrogencarbonate + 2 NH4(+). It functions in the pathway nitrogen metabolism; urea degradation; CO(2) and NH(3) from urea (urease route): step 1/1. In Cupriavidus metallidurans (strain ATCC 43123 / DSM 2839 / NBRC 102507 / CH34) (Ralstonia metallidurans), this protein is Urease subunit beta.